The following is a 282-amino-acid chain: Probable phosphatase C1620.13 (282 aa).

Histidine 61 (tele-phosphohistidine intermediate) is an active-site residue. The active-site Proton donor/acceptor is the glutamate 135.

This sequence belongs to the phosphoglycerate mutase family. BPG-dependent PGAM subfamily.

Its subcellular location is the nucleus. The protein is Probable phosphatase C1620.13 of Schizosaccharomyces pombe (strain 972 / ATCC 24843) (Fission yeast).